Consider the following 642-residue polypeptide: Threonine--tRNA ligase (642 aa).

The TGS domain occupies 1-61 (MPAITLPDGS…AADAQVVFVT (61 aa)). The tract at residues 243–536 (DHRRLGKEMD…LIEQYAGRFP (294 aa)) is catalytic. Positions 336, 387, and 513 each coordinate Zn(2+).

The protein belongs to the class-II aminoacyl-tRNA synthetase family. Homodimer. Zn(2+) is required as a cofactor.

It localises to the cytoplasm. It catalyses the reaction tRNA(Thr) + L-threonine + ATP = L-threonyl-tRNA(Thr) + AMP + diphosphate + H(+). Functionally, catalyzes the attachment of threonine to tRNA(Thr) in a two-step reaction: L-threonine is first activated by ATP to form Thr-AMP and then transferred to the acceptor end of tRNA(Thr). Also edits incorrectly charged L-seryl-tRNA(Thr). The protein is Threonine--tRNA ligase of Granulibacter bethesdensis (strain ATCC BAA-1260 / CGDNIH1).